The chain runs to 111 residues: Phosphoribosyl-ATP pyrophosphatase (111 aa).

This sequence belongs to the PRA-PH family.

It localises to the cytoplasm. It carries out the reaction 1-(5-phospho-beta-D-ribosyl)-ATP + H2O = 1-(5-phospho-beta-D-ribosyl)-5'-AMP + diphosphate + H(+). It participates in amino-acid biosynthesis; L-histidine biosynthesis; L-histidine from 5-phospho-alpha-D-ribose 1-diphosphate: step 2/9. The sequence is that of Phosphoribosyl-ATP pyrophosphatase (hisE) from Pseudomonas aeruginosa (strain ATCC 15692 / DSM 22644 / CIP 104116 / JCM 14847 / LMG 12228 / 1C / PRS 101 / PAO1).